A 473-amino-acid polypeptide reads, in one-letter code: Probable cytosolic iron-sulfur protein assembly protein 1 (473 aa).

The segment at 1–25 (MPSSTPGGSLKHLSDLTPPSQDRTW) is disordered. 2 WD repeats span residues 11–58 (KHLS…LLST) and 62–104 (GHKR…GRAE). Residues 112–133 (GGLAEADRQEGDDTDGDEEDED) are disordered. The span at 123–133 (DDTDGDEEDED) shows a compositional bias: acidic residues. WD repeat units follow at residues 144-183 (GHDS…DNNF), 191-230 (EHSG…WGQV), 235-313 (GHEG…KPPP), and 341-380 (MHDL…KPPV). The interval 377-405 (KPPVHTTSEQDKPDSARETQKANGERTAP) is disordered. A compositionally biased stretch (basic and acidic residues) spans 384–400 (SEQDKPDSARETQKANG). The stretch at 438–473 (SQQQNFDNSEMDHANEEEVLLSTGDDGVVRVWTLER) is one WD 7 repeat.

The protein belongs to the WD repeat CIA1 family.

Functionally, essential component of the cytosolic iron-sulfur (Fe/S) protein assembly machinery. Required for the maturation of extramitochondrial Fe/S proteins. This is Probable cytosolic iron-sulfur protein assembly protein 1 from Coccidioides immitis (strain RS) (Valley fever fungus).